A 495-amino-acid polypeptide reads, in one-letter code: Probable aminotransferase ACS12 (495 aa).

Residue lysine 334 is modified to N6-(pyridoxal phosphate)lysine.

The protein belongs to the class-I pyridoxal-phosphate-dependent aminotransferase family. Homodimer. The cofactor is pyridoxal 5'-phosphate. In terms of tissue distribution, expressed in roots. Expressed at low level in leaves, stems, flowers and siliques.

Functionally, probable aminotransferase. Does not have 1-aminocyclopropane-1-carboxylate synthase (ACS) activity, suggesting that it is not involved in ethylene biosynthesis. This Arabidopsis thaliana (Mouse-ear cress) protein is Probable aminotransferase ACS12 (ACS12).